Consider the following 625-residue polypeptide: Probable potassium transport system protein Kup (625 aa).

12 consecutive transmembrane segments (helical) span residues 10–30 (LAAL…TSPL), 50–70 (LLGV…LKYV), 102–122 (YFPL…DSVI), 135–155 (LGVA…AILV), 172–192 (FGPV…VNII), 214–234 (GFLA…AEAL), 251–271 (FLIA…LLLL), 284–304 (LGAW…IIAS), 340–360 (IYIP…VIGF), 369–389 (AYGI…FFVI), 397–417 (LILC…LFSA), and 422–442 (LFHG…LMLT).

It belongs to the HAK/KUP transporter (TC 2.A.72) family.

It is found in the cell inner membrane. The enzyme catalyses K(+)(in) + H(+)(in) = K(+)(out) + H(+)(out). Transport of potassium into the cell. Likely operates as a K(+):H(+) symporter. In Herminiimonas arsenicoxydans, this protein is Probable potassium transport system protein Kup.